A 329-amino-acid chain; its full sequence is Glycerol-3-phosphate dehydrogenase [NAD(P)+] (329 aa).

4 residues coordinate NADPH: serine 10, tryptophan 11, arginine 31, and lysine 105. Residues lysine 105, glycine 134, and serine 136 each coordinate sn-glycerol 3-phosphate. Alanine 138 provides a ligand contact to NADPH. Lysine 189, aspartate 242, serine 252, arginine 253, and asparagine 254 together coordinate sn-glycerol 3-phosphate. Lysine 189 serves as the catalytic Proton acceptor. Arginine 253 serves as a coordination point for NADPH. NADPH is bound by residues valine 277 and glutamate 279.

This sequence belongs to the NAD-dependent glycerol-3-phosphate dehydrogenase family.

It is found in the cytoplasm. The enzyme catalyses sn-glycerol 3-phosphate + NAD(+) = dihydroxyacetone phosphate + NADH + H(+). The catalysed reaction is sn-glycerol 3-phosphate + NADP(+) = dihydroxyacetone phosphate + NADPH + H(+). It participates in membrane lipid metabolism; glycerophospholipid metabolism. Functionally, catalyzes the reduction of the glycolytic intermediate dihydroxyacetone phosphate (DHAP) to sn-glycerol 3-phosphate (G3P), the key precursor for phospholipid synthesis. The chain is Glycerol-3-phosphate dehydrogenase [NAD(P)+] from Neisseria meningitidis serogroup C (strain 053442).